A 184-amino-acid polypeptide reads, in one-letter code: MADHLMLAEGYRLVQRPPSAAAAHGPHALRTLPPYAGPGLDSGLRPRGAPLGPPPPRQPGALAYGAFGPPSSFQPFPAVPPPAAGIAHLQPVATPYPGRAAAPPNAPGGPPGPQPAPSAAAPPPPAHALGGMDAELIDEEALTSLELELGLHRVRELPELFLGQSEFDCFSDLGSAPPAGSVSC.

Residues 18-28 (PSAAAAHGPHA) are compositionally biased toward low complexity. Disordered stretches follow at residues 18 to 67 (PSAA…YGAF) and 94 to 128 (TPYP…PAHA). A compositionally biased stretch (pro residues) spans 104–126 (PNAPGGPPGPQPAPSAAAPPPPA).

Belongs to the CITED family. Interacts via its C-terminal region with the CH1 domain of CREBBP and EP300. Interacts with all TFAP2/AP-2 isoforms. As to expression, expressed in most tissues examined with highest levels of expression in heart, liver, skeletal muscle and pancreas. Also expressed in bladder cell line ECV-304 and in various breast cancer cell lines. Also detected in both in situ and invasive breast tumors where its expression is down-regulated and mostly restricted to the cytoplasm of malignant epithelium. Down-regulation of expression is associated with elevated levels of HIF1A and increased tumor growth and angiogenesis.

Its subcellular location is the nucleus. It localises to the cytoplasm. Its function is as follows. Acts as a transcriptional coactivator for TFAP2/AP-2. Enhances estrogen-dependent transactivation mediated by estrogen receptors. May function as an inhibitor of transactivation by HIF1A by disrupting HIF1A interaction with CREBBP. May be involved in regulation of gene expression during development and differentiation of blood cells, endothelial cells and mammary epithelial cells. The sequence is that of Cbp/p300-interacting transactivator 4 from Homo sapiens (Human).